The primary structure comprises 481 residues: Tryptophan--tRNA ligase, cytoplasmic (481 aa).

The region spanning 12 to 68 (SPLELFNSIAAQGELVRSLKAGNAPKDEIESAVKMLLSLKMNYKTAMGEEYKAGCPP) is the WHEP-TRS domain. Positions 65–85 (GCPPGNSTAGSNGDPDATKAS) are disordered. An N6-succinyllysine modification is found at Lys158. Positions 168–177 (PSSEAMHLGH) match the 'HIGH' region motif. Residues 353–357 (KMSAS) carry the 'KMSKS' region motif. Ser355 carries the post-translational modification Phosphoserine.

The protein belongs to the class-I aminoacyl-tRNA synthetase family. In terms of assembly, homodimer. Interacts with oxidized form of GAPDH. Post-translationally, proteolytic cleavage generates 2 forms; T1-TrpRS and T2-TrpRS.

It localises to the cytoplasm. The enzyme catalyses tRNA(Trp) + L-tryptophan + ATP = L-tryptophyl-tRNA(Trp) + AMP + diphosphate + H(+). Catalyzes the attachment of tryptophan to tRNA(Trp) in a two-step reaction: tryptophan is first activated by ATP to form Trp-AMP and then transferred to the acceptor end of the tRNA(Trp). Could also possess an angiostatic activity. The sequence is that of Tryptophan--tRNA ligase, cytoplasmic from Rattus norvegicus (Rat).